A 1233-amino-acid chain; its full sequence is Insulin receptor substrate 1 (1233 aa).

Position 3 is a phosphoserine (Ser-3). The interval 3–133 (SPPDTDGFSD…AGGGCGGSCS (131 aa)) is mediates interaction with PHIP. Positions 12 to 115 (DVRKVGYLRK…WYQALLQLHN (104 aa)) constitute a PH domain. A Phosphoserine; by CK2 modification is found at Ser-99. The IRS-type PTB domain occupies 155–259 (FKEVWQVILK…EAMRAMSDEF (105 aa)). The segment at 257 to 425 (DEFRPRSKSQ…SDGGFISSDE (169 aa)) is disordered. A compositionally biased stretch (low complexity) spans 264–276 (KSQSSSSCSNPIS). 2 positions are modified to phosphoserine; by RPS6KB1: Ser-265 and Ser-302. Ser-307 is modified (phosphoserine; by IKKB, MAPK8 and RPS6KB1). Residues Ser-318, Ser-325, Ser-340, and Ser-343 each carry the phosphoserine modification. The segment covering 349–358 (THAHRHRGSS) has biased composition (basic residues). Low complexity-rich tracts occupy residues 378 to 399 (SPSA…GSTS) and 407 to 419 (SSAS…SDGG). A Phosphoserine modification is found at Ser-414. Phosphothreonine is present on residues Thr-441 and Thr-448. At Tyr-460 the chain carries Phosphotyrosine; by INSR. The short motif at 460–463 (YICM) is the YXXM motif 1 element. At Ser-522 the chain carries Phosphoserine; by RPS6KB1. 2 short sequence motifs (YXXM motif) span residues 546–549 (YTEM) and 608–611 (YMPM). Tyr-608 carries the phosphotyrosine; by INSR modification. A Phosphoserine modification is found at Ser-612. Tyr-628 carries the phosphotyrosine; by INSR modification. The YXXM motif 4 signature appears at 628 to 631 (YMPM). Ser-632 bears the Phosphoserine; by RPS6KB1 and ROCK2 mark. A disordered region spans residues 651–720 (QRVDPNGYMM…PPVESGGGKL (70 aa)). Residue Tyr-658 is modified to Phosphotyrosine. The YXXM motif 5 signature appears at 658–661 (YMMM). The segment covering 662–689 (SPSGSCSPDIGGGSSSSSSISAAPSGSS) has biased composition (low complexity). A YXXM motif 6 motif is present at residues 727–730 (YMNM). The disordered stretch occupies residues 766-985 (FKHTQRPGEP…VPNSRGDYMT (220 aa)). Residues 771–780 (RPGEPEEGAR) are compositionally biased toward basic and acidic residues. Low complexity-rich tracts occupy residues 785–794 (RLSSSSGRLR) and 801–810 (DSSSSTSSDS). Residue Ser-789 is modified to Phosphoserine; by AMPK and SIK2. Position 887 is a phosphoserine (Ser-887). Residues Tyr-891, Tyr-935, and Tyr-983 each carry the phosphotyrosine; by INSR modification. Residues 891 to 893 (YVN) are GRB2-binding. 3 consecutive short sequence motifs (YXXM motif) follow at residues 935-938 (YMNM), 983-986 (YMTM), and 1006-1009 (YADM). The disordered stretch occupies residues 1015 to 1137 (AEKASLPRPT…GSEDVKRHSS (123 aa)). The span at 1032–1042 (STASSSASVTP) shows a compositional bias: low complexity. 2 stretches are compositionally biased toward polar residues: residues 1043–1052 (QGATAEQATH) and 1069–1081 (TRVN…NQSA). Residues Ser-1096 and Ser-1097 each carry the phosphoserine modification. The span at 1116–1129 (AAVGGSGGGGGGGS) shows a compositional bias: gly residues. Tyr-1173 carries the post-translational modification Phosphotyrosine; by INSR. Residues 1178-1233 (LAKEHSQDCPSQQQSLPPPPPHQPLGSNEGNSPRRSSEDLSNYASISFQKQPEDRQ) form a disordered region. A Glycyl lysine isopeptide (Lys-Gly) (interchain with G-Cter in ubiquitin) cross-link involves residue Lys-1180. Residues 1203-1227 (GSNEGNSPRRSSEDLSNYASISFQK) show a composition bias toward polar residues. Tyr-1220 is subject to Phosphotyrosine; by INSR.

As to quaternary structure, interacts (via phosphorylated YXXM motifs) with PIK3R1. Interacts with ROCK1. Interacts with GRB2. Interacts with SOCS7. Interacts (via IRS-type PTB domain) with IGF1R and INSR (via the tyrosine-phosphorylated NPXY motif). Interacts with UBTF and PIK3CA. Interacts (via PH domain) with PHIP. Interacts with FER. Interacts with ALK. Interacts with EIF2AK2/PKR. Interacts with GKAP1. Interacts with DGKZ in the absence of insulin; insulin stimulation decreases this interaction. Found in a ternary complex with DGKZ and PIP5K1A in the absence of insulin stimulation. Interacts with SQSTM1; the interaction is disrupted by the presence of tensin TNS2. Interacts with NCK1 (via SH2 domain). Interacts with NCK2 (via SH3 domain). Interacts with SH2B1; this interaction enhances leptin-induced activation of the PI3-kinase pathway. Interacts with DVL2; this interaction promotes the Wnt/beta-catenin signaling pathway. Serine phosphorylation of IRS1 is a mechanism for insulin resistance. Ser-307 phosphorylation inhibits insulin action through disruption of IRS1 interaction with the insulin receptor. Phosphorylation of Tyr-891 is required for GRB2-binding. Phosphorylated by ALK. Phosphorylated at Ser-265, Ser-302, Ser-632 and Ser-1097 by RPS6KB1; phosphorylation induces accelerated degradation of IRS1. Phosphorylated on tyrosine residues in response to insulin. In skeletal muscles, dephosphorylated on Tyr-608 by TNS2 under anabolic conditions; dephosphorylation results in the proteasomal degradation of IRS1. Post-translationally, ubiquitinated by the Cul7-RING(FBXW8) complex in a mTOR-dependent manner, leading to its degradation: the Cul7-RING(FBXW8) complex recognizes and binds IRS1 previously phosphorylated by S6 kinase (RPS6KB1 or RPS6KB2). Ubiquitinated by TRAF4 through 'Lys-29' linkage; this ubiquitination regulates the interaction of IRS1 with IGFR and IRS1 tyrosine phosphorylation upon IGF1 stimulation. In terms of processing, S-nitrosylation at by BLVRB inhibits its activity. Expressed in osteoblasts, but not in osteoclasts.

It localises to the cytoplasm. The protein localises to the nucleus. Signaling adapter protein that participates in the signal transduction from two prominent receptor tyrosine kinases, insulin receptor/INSR and insulin-like growth factor I receptor/IGF1R. Plays therefore an important role in development, growth, glucose homeostasis as well as lipid metabolism. Upon phosphorylation by the insulin receptor, functions as a signaling scaffold that propagates insulin action through binding to SH2 domain-containing proteins including the p85 regulatory subunit of PI3K, NCK1, NCK2, GRB2 or SHP2. Recruitment of GRB2 leads to the activation of the guanine nucleotide exchange factor SOS1 which in turn triggers the Ras/Raf/MEK/MAPK signaling cascade. Activation of the PI3K/AKT pathway is responsible for most of insulin metabolic effects in the cell, and the Ras/Raf/MEK/MAPK is involved in the regulation of gene expression and in cooperation with the PI3K pathway regulates cell growth and differentiation. Acts a positive regulator of the Wnt/beta-catenin signaling pathway through suppression of DVL2 autophagy-mediated degradation leading to cell proliferation. The protein is Insulin receptor substrate 1 (Irs1) of Mus musculus (Mouse).